Consider the following 63-residue polypeptide: SPbeta prophage-derived uncharacterized protein YotC (63 aa).

This is SPbeta prophage-derived uncharacterized protein YotC (yotC) from Bacillus subtilis (strain 168).